The primary structure comprises 504 residues: MQLTLWTYEGPPHIGAMRIATAMQGVHYVLHAPQGDTYADLLFTMIERRDRRPPVTYTTFQARDLGSDTATLFKNAVRDAYDRFKPEAMIVGASCTAELIQDDPGGLAAALGLPIPVIPLELPAYQRKENWGAAETLYHLVRAATNGVATPDRTGRPVAVNILGPAALGFRHRDDLIEVTDLLGKLGVSINVIAPLGARFADLARIPAADANIVLYPEIAGTAAAYLARKFGQKTITTVPIGLNATRDFAAEIAALTGSTVPDDLESQARSSWYARSIDSTYLTGKRVFIFGDASHAIALARIAATEIGFTIAGLGTYSREFAREVKSAAALYNVEALISDDYLTVEAAIAAAQPELVLGTQMERHIAKRLGIPCAVISAPTHVQDFPARHSPFAGFEGANVLFDTLTHPLMMGLEEHLLGMFREDFEFNDQAAPSHLGAEAAAPVATAPILTGWEPSAEAELKKIPFFVRGKARKNTELFAAEHGVTLITIETIYDAKAHFSR.

A [4Fe-4S] cluster-binding site is contributed by aspartate 36. Aspartate 279 functions as the Proton donor in the catalytic mechanism. 414 to 415 (GL) contacts substrate.

It belongs to the ChlB/BchB/BchZ family. Protochlorophyllide reductase is composed of three subunits; BchL, BchN and BchB. Forms a heterotetramer of two BchB and two BchN subunits. It depends on [4Fe-4S] cluster as a cofactor.

It catalyses the reaction chlorophyllide a + oxidized 2[4Fe-4S]-[ferredoxin] + 2 ADP + 2 phosphate = protochlorophyllide a + reduced 2[4Fe-4S]-[ferredoxin] + 2 ATP + 2 H2O. Its pathway is porphyrin-containing compound metabolism; bacteriochlorophyll biosynthesis (light-independent). Functionally, component of the dark-operative protochlorophyllide reductase (DPOR) that uses Mg-ATP and reduced ferredoxin to reduce ring D of protochlorophyllide (Pchlide) to form chlorophyllide a (Chlide). This reaction is light-independent. The NB-protein (BchN-BchB) is the catalytic component of the complex. This is Light-independent protochlorophyllide reductase subunit B from Acidiphilium rubrum.